The primary structure comprises 146 residues: Tol-Pal system protein TolR (146 aa).

The chain crosses the membrane as a helical span at residues 16–36 (VVPYIDVMLVLLVIFMVTAPM).

This sequence belongs to the ExbD/TolR family. In terms of assembly, the Tol-Pal system is composed of five core proteins: the inner membrane proteins TolA, TolQ and TolR, the periplasmic protein TolB and the outer membrane protein Pal. They form a network linking the inner and outer membranes and the peptidoglycan layer.

The protein localises to the cell inner membrane. Its function is as follows. Part of the Tol-Pal system, which plays a role in outer membrane invagination during cell division and is important for maintaining outer membrane integrity. The sequence is that of Tol-Pal system protein TolR from Pseudomonas aeruginosa (strain ATCC 15692 / DSM 22644 / CIP 104116 / JCM 14847 / LMG 12228 / 1C / PRS 101 / PAO1).